We begin with the raw amino-acid sequence, 432 residues long: Glutamyl-tRNA reductase (432 aa).

Residues 49-52 (TCNR), Ser109, 114-116 (EGQ), and Gln120 contribute to the substrate site. The active-site Nucleophile is the Cys50. Residue 189-194 (GAGKMS) participates in NADP(+) binding.

The protein belongs to the glutamyl-tRNA reductase family. Homodimer.

The protein resides in the plastid. It localises to the cyanelle. The enzyme catalyses (S)-4-amino-5-oxopentanoate + tRNA(Glu) + NADP(+) = L-glutamyl-tRNA(Glu) + NADPH + H(+). It functions in the pathway porphyrin-containing compound metabolism; protoporphyrin-IX biosynthesis; 5-aminolevulinate from L-glutamyl-tRNA(Glu): step 1/2. Its pathway is porphyrin-containing compound metabolism; chlorophyll biosynthesis. Functionally, catalyzes the NADPH-dependent reduction of glutamyl-tRNA(Glu) to glutamate 1-semialdehyde (GSA). This Cyanophora paradoxa protein is Glutamyl-tRNA reductase.